Consider the following 256-residue polypeptide: Triosephosphate isomerase (256 aa).

9–11 serves as a coordination point for substrate; sequence NWK. The Electrophile role is filled by H94. The active-site Proton acceptor is the E166. Substrate-binding positions include G172, S211, and 232–233; that span reads GG.

This sequence belongs to the triosephosphate isomerase family. Homodimer.

Its subcellular location is the cytoplasm. It carries out the reaction D-glyceraldehyde 3-phosphate = dihydroxyacetone phosphate. Its pathway is carbohydrate biosynthesis; gluconeogenesis. It participates in carbohydrate degradation; glycolysis; D-glyceraldehyde 3-phosphate from glycerone phosphate: step 1/1. Its function is as follows. Involved in the gluconeogenesis. Catalyzes stereospecifically the conversion of dihydroxyacetone phosphate (DHAP) to D-glyceraldehyde-3-phosphate (G3P). In Natranaerobius thermophilus (strain ATCC BAA-1301 / DSM 18059 / JW/NM-WN-LF), this protein is Triosephosphate isomerase.